The following is a 343-amino-acid chain: Aspartate carbamoyltransferase catalytic subunit (343 aa).

Carbamoyl phosphate-binding residues include arginine 91 and threonine 92. Position 119 (lysine 119) interacts with L-aspartate. Carbamoyl phosphate contacts are provided by arginine 141, histidine 171, and glutamine 174. Residues arginine 204 and arginine 259 each coordinate L-aspartate. Positions 300 and 301 each coordinate carbamoyl phosphate.

Belongs to the aspartate/ornithine carbamoyltransferase superfamily. ATCase family. Heterododecamer (2C3:3R2) of six catalytic PyrB chains organized as two trimers (C3), and six regulatory PyrI chains organized as three dimers (R2).

The enzyme catalyses carbamoyl phosphate + L-aspartate = N-carbamoyl-L-aspartate + phosphate + H(+). Its pathway is pyrimidine metabolism; UMP biosynthesis via de novo pathway; (S)-dihydroorotate from bicarbonate: step 2/3. Its function is as follows. Catalyzes the condensation of carbamoyl phosphate and aspartate to form carbamoyl aspartate and inorganic phosphate, the committed step in the de novo pyrimidine nucleotide biosynthesis pathway. The chain is Aspartate carbamoyltransferase catalytic subunit from Burkholderia ambifaria (strain MC40-6).